The following is a 408-amino-acid chain: Na(+)-translocating NADH-quinone reductase subunit F (408 aa).

Residues 4-24 (IYLGVGMFTIIVLVLVAIIMF) traverse the membrane as a helical segment. The region spanning 33 to 127 (GDVEILINDD…DMEIELPEEV (95 aa)) is the 2Fe-2S ferredoxin-type domain. Cys-70, Cys-76, Cys-79, and Cys-111 together coordinate [2Fe-2S] cluster. The FAD-binding FR-type domain occupies 130–270 (IRKWDCTVKS…SGPFGEFFAK (141 aa)).

This sequence belongs to the NqrF family. Composed of six subunits; NqrA, NqrB, NqrC, NqrD, NqrE and NqrF. [2Fe-2S] cluster is required as a cofactor. FAD serves as cofactor.

It is found in the cell inner membrane. It catalyses the reaction a ubiquinone + n Na(+)(in) + NADH + H(+) = a ubiquinol + n Na(+)(out) + NAD(+). NQR complex catalyzes the reduction of ubiquinone-1 to ubiquinol by two successive reactions, coupled with the transport of Na(+) ions from the cytoplasm to the periplasm. The first step is catalyzed by NqrF, which accepts electrons from NADH and reduces ubiquinone-1 to ubisemiquinone by a one-electron transfer pathway. This Idiomarina loihiensis (strain ATCC BAA-735 / DSM 15497 / L2-TR) protein is Na(+)-translocating NADH-quinone reductase subunit F.